A 252-amino-acid chain; its full sequence is Uracil-DNA glycosylase (252 aa).

Asp-87 functions as the Proton acceptor in the catalytic mechanism.

It belongs to the uracil-DNA glycosylase (UDG) superfamily. UNG family.

It is found in the host nucleus. It carries out the reaction Hydrolyzes single-stranded DNA or mismatched double-stranded DNA and polynucleotides, releasing free uracil.. Its function is as follows. Excises uracil residues from the DNA which can arise as a result of misincorporation of dUMP residues by DNA polymerase or deamination of cytosines. Therefore may reduce deleterious uracil incorporation into the viral genome, particularly in terminally differentiated cells which lack DNA repair enzymes. The polypeptide is Uracil-DNA glycosylase (46) (Alcelaphine herpesvirus 1 (strain C500) (AlHV-1)).